The primary structure comprises 284 residues: Heat stress transcription factor B-1 (284 aa).

A DNA-binding region spans residues 12 to 106; it reads PAPFLSKTYQ…LLTDIRRRKS (95 aa). Residues 118–151 form a disordered region; that stretch reads VGSPSESNSGGGDDHGSSSTSSPGSSKNPGSVEN. The span at 134–148 shows a compositional bias: low complexity; sequence SSSTSSPGSSKNPGS. The tract at residues 147–192 is hydrophobic repeat HR-A/B; sequence GSVENMVADLSGENEKLKRENNNLSSELAAAKKQRDELVTFLTGHL. The short motif at 247-252 is the Nuclear localization signal element; the sequence is RKKRDR.

This sequence belongs to the HSF family. Class B subfamily. In terms of assembly, homotrimer. In terms of processing, exhibits temperature-dependent phosphorylation.

It is found in the nucleus. Functionally, transcriptional regulator that specifically binds DNA sequence 5'-AGAAnnTTCT-3' known as heat shock promoter elements (HSE). The protein is Heat stress transcription factor B-1 (HSFB1) of Arabidopsis thaliana (Mouse-ear cress).